A 206-amino-acid polypeptide reads, in one-letter code: Large ribosomal subunit protein uL4 (206 aa).

It belongs to the universal ribosomal protein uL4 family. Part of the 50S ribosomal subunit.

Functionally, one of the primary rRNA binding proteins, this protein initially binds near the 5'-end of the 23S rRNA. It is important during the early stages of 50S assembly. It makes multiple contacts with different domains of the 23S rRNA in the assembled 50S subunit and ribosome. In terms of biological role, forms part of the polypeptide exit tunnel. This chain is Large ribosomal subunit protein uL4, found in Rhodopseudomonas palustris (strain ATCC BAA-98 / CGA009).